The chain runs to 375 residues: o-succinylbenzoate synthase (375 aa).

The active-site Proton donor is the Lys166. Residues Asp191, Glu216, and Asp241 each contribute to the Mg(2+) site. The active-site Proton acceptor is the Lys265.

Belongs to the mandelate racemase/muconate lactonizing enzyme family. MenC type 2 subfamily. Homotetramer. Requires a divalent metal cation as cofactor.

It carries out the reaction (1R,6R)-6-hydroxy-2-succinyl-cyclohexa-2,4-diene-1-carboxylate = 2-succinylbenzoate + H2O. It catalyses the reaction N-acetyl-D-methionine = N-acetyl-L-methionine. The protein operates within quinol/quinone metabolism; 1,4-dihydroxy-2-naphthoate biosynthesis; 1,4-dihydroxy-2-naphthoate from chorismate: step 4/7. It functions in the pathway quinol/quinone metabolism; menaquinone biosynthesis. Its function is as follows. Converts 2-succinyl-6-hydroxy-2,4-cyclohexadiene-1-carboxylate (SHCHC) to 2-succinylbenzoate (OSB). Also acts as a N-succinylamino acid racemase (NSAR) that catalyzes the racemization of N-succinyl-D/L-phenylalanine. Can catalyze the racemization of a broad range of N-acylamino acids, including N-acetyl-D-methionine, N-formyl-D/L-methionine, N-formyl-D/L-norleucine, N-formyl-D/L-aminobutyric acid, N-formyl-D/L-norvaline, N-formyl-D/L-homophenylalanine, N-carbamoyl-D-methionine and N-carbamoyl-D-norleucine. May be a bifunctional enzyme involved in menaquinone biosynthesis and in an irreversible pathway for the conversion of D- to L-amino acids, thereby facilitating the survival and/or growth of the organism. The chain is o-succinylbenzoate synthase from Geobacillus stearothermophilus (Bacillus stearothermophilus).